The sequence spans 229 residues: Cytidylate kinase (229 aa).

Position 10 to 18 (10 to 18 (GYSSCGKST)) interacts with ATP.

Belongs to the cytidylate kinase family. Type 1 subfamily.

It is found in the cytoplasm. The enzyme catalyses CMP + ATP = CDP + ADP. It catalyses the reaction dCMP + ATP = dCDP + ADP. The polypeptide is Cytidylate kinase (Phocaeicola vulgatus (strain ATCC 8482 / DSM 1447 / JCM 5826 / CCUG 4940 / NBRC 14291 / NCTC 11154) (Bacteroides vulgatus)).